Here is a 97-residue protein sequence, read N- to C-terminus: Serine protease inhibitor Kazal-type 13 (97 aa).

The signal sequence occupies residues 1–26; the sequence is MKRSGCWHQRMLLSLVLLTWTHVTFS. A glycan (N-linked (GlcNAc...) asparagine) is linked at asparagine 33. The 62-residue stretch at 36–97 folds into the Kazal-like domain; that stretch reads RWPKPPCKMY…IQFVKYGKCE (62 aa). Disulfide bonds link cysteine 42/cysteine 78, cysteine 56/cysteine 75, and cysteine 64/cysteine 96.

Its subcellular location is the secreted. Functionally, may be a serine protease inhibitor. Essential for sperm maturation and fertility. Inhibits sperm acrosome reaction, protecting sperm from premature reaction. This chain is Serine protease inhibitor Kazal-type 13 (Spink13), found in Mus musculus (Mouse).